The sequence spans 240 residues: Eukaryotic translation initiation factor 4E-3 (240 aa).

The interval 1–51 (MVVTDSPVSGIMADQNIDPNTTTSPSPKEKHVSAIKAISGDEKAPSKEKKN) is disordered. Positions 17-26 (IDPNTTTSPS) are enriched in polar residues. Basic and acidic residues predominate over residues 39–51 (SGDEKAPSKEKKN). 2 EIF4G-binding regions span residues 65–68 (HCFQ) and 75–111 (FDNP…NNIH). Residues 83-88 (NQVIWG), Lys-115, and 133-134 (WE) each bind mRNA. A disulfide bridge connects residues Cys-138 and Cys-176. Residues 159–168 (NTLLALVGEQ) form an EIF4G-binding region. Residues 183–188 (RARGDR) and 228–232 (KTLDR) contribute to the mRNA site.

This sequence belongs to the eukaryotic initiation factor 4E family. EIF4F is a multi-subunit complex, the composition of which varies with external and internal environmental conditions. It is composed of at least EIF4A, EIF4E and EIF4G. EIF4E is also known to interact with other partners. In higher plants two isoforms of EIF4F have been identified, named isoform EIF4F and isoform EIF(iso)4F. Isoform EIF4F has subunits p220 and p26, whereas isoform EIF(iso)4F has subunits p82 and p28. In terms of processing, according to the redox status, the Cys-138-Cys-176 disulfide bridge may have a role in regulating protein function by affecting its ability to bind capped mRNA.

It is found in the nucleus. The protein resides in the cytoplasm. Its function is as follows. Component of the protein complex eIF4F, which is involved in the recognition of the mRNA cap, ATP-dependent unwinding of 5'-terminal secondary structure and recruitment of mRNA to the ribosome. Recognizes and binds the 7-methylguanosine-containing mRNA cap during an early step in the initiation of protein synthesis and facilitates ribosome binding by inducing the unwinding of the mRNAs secondary structures. The chain is Eukaryotic translation initiation factor 4E-3 from Arabidopsis thaliana (Mouse-ear cress).